The following is a 315-amino-acid chain: Ribonuclease Z (315 aa).

The Zn(2+) site is built by H62, H64, D66, H67, H144, D215, and H273. Residue D66 is the Proton acceptor of the active site.

It belongs to the RNase Z family. In terms of assembly, homodimer. Zn(2+) is required as a cofactor.

The enzyme catalyses Endonucleolytic cleavage of RNA, removing extra 3' nucleotides from tRNA precursor, generating 3' termini of tRNAs. A 3'-hydroxy group is left at the tRNA terminus and a 5'-phosphoryl group is left at the trailer molecule.. Functionally, zinc phosphodiesterase, which displays some tRNA 3'-processing endonuclease activity. Probably involved in tRNA maturation, by removing a 3'-trailer from precursor tRNA. In Synechococcus sp. (strain CC9311), this protein is Ribonuclease Z.